A 392-amino-acid chain; its full sequence is Nucleolysin TIAR (392 aa).

2 consecutive RRM domains span residues 9–102 (RTLY…WATT) and 114–192 (FHVF…WATR). Lys-139 carries the post-translational modification N6-acetyllysine. Residue Ser-218 is modified to Phosphoserine. The RRM 3 domain occupies 222–294 (CTVYCGGIAS…HVVKCYWGKE (73 aa)). Positions 363–392 (GAQPPQGQAPPPVIPPPNQAGYGMASFPTQ) are disordered. Pro residues predominate over residues 369–380 (GQAPPPVIPPPN).

As to quaternary structure, interacts with FASTK. Post-translationally, phosphorylated by MAPK14 following DNA damage, releasing TIAR from GADD45A mRNA. As to expression, expressed both in primordial germ cells (PGCs) and in neighboring somatic cells.

The protein localises to the nucleus. It localises to the cytoplasm. Its subcellular location is the stress granule. It is found in the cytolytic granule. Its function is as follows. RNA-binding protein involved in alternative pre-RNA splicing and in cytoplasmic stress granules formation. Shows a preference for uridine-rich RNAs. Activates splicing of alternative exons with weak 5' splice sites followed by a U-rich stretch on its own pre-mRNA and on TIA1 mRNA. Promotes the inclusion of TIA1 exon 5 to give rise to the long isoform (isoform a) of TIA1. Acts downstream of the stress-induced phosphorylation of EIF2S1/EIF2A to promote the recruitment of untranslated mRNAs to cytoplasmic stress granules (SG). Possesses nucleolytic activity against cytotoxic lymphocyte target cells. May be involved in apoptosis. The protein is Nucleolysin TIAR (Tial1) of Mus musculus (Mouse).